The following is a 212-amino-acid chain: 3-demethoxyubiquinol 3-hydroxylase (212 aa).

The span at 1 to 14 (MTSPSSRTPRGSTP) shows a compositional bias: low complexity. The interval 1–22 (MTSPSSRTPRGSTPPFEPSADE) is disordered. Fe cation is bound by residues glutamate 58, glutamate 89, histidine 92, glutamate 141, glutamate 173, and histidine 176.

The protein belongs to the COQ7 family. The cofactor is Fe cation.

It is found in the cell membrane. The enzyme catalyses a 5-methoxy-2-methyl-3-(all-trans-polyprenyl)benzene-1,4-diol + AH2 + O2 = a 3-demethylubiquinol + A + H2O. The protein operates within cofactor biosynthesis; ubiquinone biosynthesis. In terms of biological role, catalyzes the hydroxylation of 2-nonaprenyl-3-methyl-6-methoxy-1,4-benzoquinol during ubiquinone biosynthesis. This is 3-demethoxyubiquinol 3-hydroxylase from Rhodospirillum rubrum (strain ATCC 11170 / ATH 1.1.1 / DSM 467 / LMG 4362 / NCIMB 8255 / S1).